The following is a 411-amino-acid chain: Epoxyqueuosine reductase (411 aa).

Catalysis depends on aspartate 171, which acts as the Proton donor. In terms of domain architecture, 4Fe-4S ferredoxin-type spans 213 to 245 (LPLPVDKPQEEQCGRCVACMTTCPTGAIVAPYT). Cysteine 225, cysteine 228, cysteine 231, cysteine 235, cysteine 251, cysteine 278, cysteine 281, and cysteine 285 together coordinate [4Fe-4S] cluster.

Belongs to the QueG family. Monomer. The cofactor is cob(II)alamin. Requires [4Fe-4S] cluster as cofactor.

It localises to the cytoplasm. The enzyme catalyses epoxyqueuosine(34) in tRNA + AH2 = queuosine(34) in tRNA + A + H2O. The protein operates within tRNA modification; tRNA-queuosine biosynthesis. In terms of biological role, catalyzes the conversion of epoxyqueuosine (oQ) to queuosine (Q), which is a hypermodified base found in the wobble positions of tRNA(Asp), tRNA(Asn), tRNA(His) and tRNA(Tyr). This Yersinia pestis protein is Epoxyqueuosine reductase.